Reading from the N-terminus, the 86-residue chain is Large ribosomal subunit protein bL31 (86 aa).

The segment at 65 to 86 (YGMGSADSATSKETKESKKSDK) is disordered. Positions 74–86 (TSKETKESKKSDK) are enriched in basic and acidic residues.

It belongs to the bacterial ribosomal protein bL31 family. Type A subfamily. In terms of assembly, part of the 50S ribosomal subunit.

Binds the 23S rRNA. The chain is Large ribosomal subunit protein bL31 from Prochlorococcus marinus subsp. pastoris (strain CCMP1986 / NIES-2087 / MED4).